The chain runs to 115 residues: Large ribosomal subunit protein bL20c (115 aa).

Belongs to the bacterial ribosomal protein bL20 family.

The protein resides in the plastid. Its subcellular location is the chloroplast. Its function is as follows. Binds directly to 23S ribosomal RNA and is necessary for the in vitro assembly process of the 50S ribosomal subunit. It is not involved in the protein synthesizing functions of that subunit. This is Large ribosomal subunit protein bL20c from Cycas taitungensis (Prince sago).